The sequence spans 437 residues: uncharacterized protein (437 aa).

A helical membrane pass occupies residues 47–67; it reads LLIILIGFILLSSISAIQIDA.

It localises to the membrane. This is an uncharacterized protein from Methanocaldococcus jannaschii (strain ATCC 43067 / DSM 2661 / JAL-1 / JCM 10045 / NBRC 100440) (Methanococcus jannaschii).